The following is a 366-amino-acid chain: ATP-dependent 6-phosphofructokinase 2 (366 aa).

ATP is bound by residues glycine 15, 78–79 (KD), and 119–122 (GDGT). Aspartate 120 serves as a coordination point for Mg(2+). Residues 142-144 (TID), arginine 179, 186-188 (MGR), glutamate 239, arginine 284, and 290-293 (HIQR) each bind substrate. Residue aspartate 144 is the Proton acceptor of the active site.

The protein belongs to the phosphofructokinase type A (PFKA) family. Mixed-substrate PFK group III subfamily. In terms of assembly, homodimer or homotetramer. Mg(2+) serves as cofactor.

Its subcellular location is the cytoplasm. It catalyses the reaction beta-D-fructose 6-phosphate + ATP = beta-D-fructose 1,6-bisphosphate + ADP + H(+). It functions in the pathway carbohydrate degradation; glycolysis; D-glyceraldehyde 3-phosphate and glycerone phosphate from D-glucose: step 3/4. With respect to regulation, subject to allosteric activation by ADP and other diphosphonucleosides, and inhibition by phosphoenolpyruvate. In terms of biological role, catalyzes the phosphorylation of D-fructose 6-phosphate to fructose 1,6-bisphosphate by ATP, the first committing step of glycolysis. The protein is ATP-dependent 6-phosphofructokinase 2 of Clostridium perfringens (strain 13 / Type A).